The sequence spans 493 residues: CBL-interacting protein kinase 26 (493 aa).

One can recognise a Protein kinase domain in the interval 12 to 266 (YEIGRQLGQG…IPKIKRSAWY (255 aa)). Residues 18–26 (LGQGNFAKV) and K41 each bind ATP. The active-site Proton acceptor is the D134. The interval 152-181 (DFGLSALSESKRHDGLLHTTCGTPAYVAPE) is activation loop. The segment at 311 to 332 (KVYTNGEATTSDSPECSNSDGK) is disordered. Residues 316–332 (GEATTSDSPECSNSDGK) are compositionally biased toward polar residues. The NAF domain occupies 320 to 360 (TSDSPECSNSDGKQASLSLPNLNAFDIISLSTGFDLSNLFE). Residues 365–394 (RREERFTTRQPAAAIFAKLNELARRFKLKI) form a PPI region. The interval 465 to 493 (GQHQQPEQSMQGMQGEQQPSRLPSQQPQG) is disordered.

Belongs to the protein kinase superfamily. CAMK Ser/Thr protein kinase family. SNF1 subfamily. Mn(2+) is required as a cofactor.

The enzyme catalyses L-seryl-[protein] + ATP = O-phospho-L-seryl-[protein] + ADP + H(+). It carries out the reaction L-threonyl-[protein] + ATP = O-phospho-L-threonyl-[protein] + ADP + H(+). Its function is as follows. CIPK serine-threonine protein kinases interact with CBL proteins. Binding of a CBL protein to the regulatory NAF domain of CIPK protein lead to the activation of the kinase in a calcium-dependent manner. This is CBL-interacting protein kinase 26 (CIPK26) from Oryza sativa subsp. japonica (Rice).